We begin with the raw amino-acid sequence, 34 residues long: Delta-theraphotoxin-Hm1b (34 aa).

3 cysteine pairs are disulfide-bonded: C2/C16, C9/C21, and C15/C28. Phenylalanine amide is present on F34.

Belongs to the neurotoxin 10 (Hwtx-1) family. 09 (HaTx) subfamily. Expressed by the venom gland.

The protein resides in the secreted. Gating-modifier toxin that potently and selectively acts on Nav1.1/SCN1A and Nav1.3/SCN3A. It enhances hNav1.1/SCN1A currents and delays fast inactivation of the channel (EC(50)=11.6 nM), leading to a sustained current. Similar effects are observed at Nav1.3/SCN3A (EC(50)=11.8 nM), but with less sustained currents. When tested on Nav1.2/SCN2A, the native toxin decreases the peak current by 50% at saturating concentration, whereas the recombinant toxin only shows a weak decrease of peak current. The native toxin specifically activates the voltage-gated sodium channel Nav1.1/SCN1A in somatosensory neurons to elicit acute pain and mechanical allodynia. When tested on Nav1.1/SCN1A, the toxin induces a hyperpolarising shift of the voltage-dependence of steady-state activation, and induces a depolarizing shift in the voltage dependence of inactivation. In addition, it does not modify the recovery from fast inactivation in Nav1.1/SCN1A. The toxin hydrophobic face probably interacts with the domain IV voltage-sensor of Nav1.1/SCN1A and Nav1.3/SCN3A and may trap the voltage-sensing S4 helix in a partially activated state. In vivo, intracerebroventricular injection into mice elicits convulsions, spasms, tremors and rapid death. When injected into mouse hindpaw, the toxin elicits an immediate and robust response to pain. However, intraplantar injection of toxin does not cause neurogenic inflammation or alter sensitivity to heat, indicative of a modality-specific effect on mechanosensitive neurons. The chain is Delta-theraphotoxin-Hm1b from Heteroscodra maculata (Togo starburst tarantula).